The primary structure comprises 511 residues: Glucans biosynthesis protein G (511 aa).

The N-terminal stretch at 1–22 is a signal peptide; the sequence is MMKMRWLSAAVMLTLYTSSSWA.

The protein belongs to the OpgD/OpgG family.

It localises to the periplasm. It functions in the pathway glycan metabolism; osmoregulated periplasmic glucan (OPG) biosynthesis. Involved in the biosynthesis of osmoregulated periplasmic glucans (OPGs). This is Glucans biosynthesis protein G from Escherichia coli O8 (strain IAI1).